Here is a 382-residue protein sequence, read N- to C-terminus: MSTWLLPENIADVLPSEARKIEELRRRLLDRFRSYGYEMVMPPLLEYLESLLTSGGADLRLRTFKLVDQLSGRTLGLRADITPQVARIDAHLLNRQGVTRLCYAGHVMHTRPRGLHATREQIQIGAEIYGHAGLEADLEIQQLMLDALHLAGLSRIRLDLCHAGVLAALLARDAQAAARGEALYDALSGKDVPLLHELTDDLGADTRAALRALPHLYGDASVLDEARARLPVLPEITRALDDLAQLAASAKGVEVAVDLADLRGYAYHSGAMFTAYIDGVPNAIARGGRYDHVGQAYGRARPATGFSLDLRELARISPVEARGTAILAPWAQDDALSAAVAALRDAGEVVIQALPGHDHVLDEFACDRSLVERAGAWVVEPR.

It belongs to the class-II aminoacyl-tRNA synthetase family. HisZ subfamily. As to quaternary structure, heteromultimer composed of HisG and HisZ subunits.

The protein resides in the cytoplasm. The protein operates within amino-acid biosynthesis; L-histidine biosynthesis; L-histidine from 5-phospho-alpha-D-ribose 1-diphosphate: step 1/9. Required for the first step of histidine biosynthesis. May allow the feedback regulation of ATP phosphoribosyltransferase activity by histidine. The chain is ATP phosphoribosyltransferase regulatory subunit from Burkholderia vietnamiensis (strain G4 / LMG 22486) (Burkholderia cepacia (strain R1808)).